A 700-amino-acid polypeptide reads, in one-letter code: Elongation factor G (700 aa).

Residues 13–288 (SKIRNIGITA…AVIDYLPAPD (276 aa)) form the tr-type G domain. Residues 22 to 29 (AHIDAGKT), 86 to 90 (DTPGH), and 140 to 143 (NKLD) contribute to the GTP site.

It belongs to the TRAFAC class translation factor GTPase superfamily. Classic translation factor GTPase family. EF-G/EF-2 subfamily.

It is found in the cytoplasm. Functionally, catalyzes the GTP-dependent ribosomal translocation step during translation elongation. During this step, the ribosome changes from the pre-translocational (PRE) to the post-translocational (POST) state as the newly formed A-site-bound peptidyl-tRNA and P-site-bound deacylated tRNA move to the P and E sites, respectively. Catalyzes the coordinated movement of the two tRNA molecules, the mRNA and conformational changes in the ribosome. The polypeptide is Elongation factor G (Gluconobacter oxydans (strain 621H) (Gluconobacter suboxydans)).